We begin with the raw amino-acid sequence, 111 residues long: P antigen family member 2 (111 aa).

A disordered region spans residues 1–66 (MSELLRARSQ…NQAVPAFQGP (66 aa)). Polar residues predominate over residues 8–24 (RSQSSERGNDQESSQPV).

Belongs to the GAGE family.

In Homo sapiens (Human), this protein is P antigen family member 2 (PAGE2).